We begin with the raw amino-acid sequence, 177 residues long: MASSMMASTAAAVARAGPAQTNMVPFNACRSSVPFPATRKANNDLSTLPSNGGRVSCMQVWPPEGLKKFETLSYLPPLSVEDLAKEVDYLLRNDWVPCIEFSKEGFVYRENHASPGYYDGRYWTMWKLPMFGCTDASQVIAEVEEAKKAYPEYFVRIIGFDNKRQVQCISFIAYKPT.

A chloroplast-targeting transit peptide spans methionine 1–serine 56.

This sequence belongs to the RuBisCO small chain family. As to quaternary structure, heterohexadecamer of 8 large and 8 small subunits.

It is found in the plastid. It localises to the chloroplast. Functionally, ruBisCO catalyzes two reactions: the carboxylation of D-ribulose 1,5-bisphosphate, the primary event in carbon dioxide fixation, as well as the oxidative fragmentation of the pentose substrate. Both reactions occur simultaneously and in competition at the same active site. Although the small subunit is not catalytic it is essential for maximal activity. The protein is Ribulose bisphosphate carboxylase small subunit, chloroplastic 4 of Lemna gibba (Swollen duckweed).